A 281-amino-acid polypeptide reads, in one-letter code: MNVLSMFGRNATRETSSPAATAGRYADEGDWEGDDHQPATAEGSLAAFGLAKSYGGRKVVRDVSLDVRRGEAVGLLGPNGAGKTTVFYMITGLVKADQGRIELDGHDVTPMPMYRRARLGIGYLPQEASIFRGLSVEDNIGAVLEITEPNRKRRAEELDALLEEFKITHVRKSPSIALSGGERRRVEIARALASRPAFMLLDEPFAGIDPIAVGDIQALVRHLTTRGIGVLITDHNVRETLGLIDRAYIIHSGTVLMEGDPESIVASPDVRRLYLGEEFRL.

A disordered region spans residues 1–38 (MNVLSMFGRNATRETSSPAATAGRYADEGDWEGDDHQP). One can recognise an ABC transporter domain in the interval 45–277 (LAAFGLAKSY…PDVRRLYLGE (233 aa)). An ATP-binding site is contributed by 77–84 (GPNGAGKT).

The protein belongs to the ABC transporter superfamily.

This is Probable ABC transporter ATP-binding protein AZC_3926 from Azorhizobium caulinodans (strain ATCC 43989 / DSM 5975 / JCM 20966 / LMG 6465 / NBRC 14845 / NCIMB 13405 / ORS 571).